The primary structure comprises 234 residues: Small ribosomal subunit protein uS2c (234 aa).

The protein belongs to the universal ribosomal protein uS2 family.

The protein localises to the plastid. It localises to the chloroplast. The chain is Small ribosomal subunit protein uS2c (rps2) from Pinus koraiensis (Korean pine).